Here is a 160-residue protein sequence, read N- to C-terminus: Cyclic pyranopterin monophosphate synthase (160 aa).

Substrate-binding positions include 75–77 and 116–117; these read MCH and ME. Aspartate 131 is an active-site residue.

This sequence belongs to the MoaC family. In terms of assembly, homohexamer; trimer of dimers.

It carries out the reaction (8S)-3',8-cyclo-7,8-dihydroguanosine 5'-triphosphate = cyclic pyranopterin phosphate + diphosphate. It functions in the pathway cofactor biosynthesis; molybdopterin biosynthesis. In terms of biological role, catalyzes the conversion of (8S)-3',8-cyclo-7,8-dihydroguanosine 5'-triphosphate to cyclic pyranopterin monophosphate (cPMP). In Staphylococcus haemolyticus (strain JCSC1435), this protein is Cyclic pyranopterin monophosphate synthase.